We begin with the raw amino-acid sequence, 147 residues long: TRAF-interacting protein with FHA domain-containing protein B (147 aa).

Residues 36–108 (LLVGRGQNTH…LGTINRISFS (73 aa)) form the FHA domain.

As to quaternary structure, interacts with TIFA. In terms of tissue distribution, expressed at high levels in spleen and at moderate levels in lung, thymus, and small intestine.

In terms of biological role, inhibits TIFA-mediated TRAF6 activation possibly by inducing a conformational change in TIFA. The chain is TRAF-interacting protein with FHA domain-containing protein B from Mus musculus (Mouse).